The chain runs to 392 residues: Na(+)/H(+) antiporter NhaA (392 aa).

The next 11 membrane-spanning stretches (helical) occupy residues 17 to 37 (ILLI…LSAL), 59 to 79 (LILW…GLEV), 95 to 115 (IFPA…YLFF), 125 to 145 (GWAI…ALLG), 154 to 174 (VFLL…IALF), 179 to 199 (VALV…ILNW), 213 to 233 (FILW…GVIV), 254 to 274 (VLHP…NAGV), 290 to 310 (VGIA…FSWV), 328 to 348 (IFAV…IAGL), and 363 to 383 (LGIL…LNSV).

It belongs to the NhaA Na(+)/H(+) (TC 2.A.33) antiporter family.

The protein resides in the cell inner membrane. It carries out the reaction Na(+)(in) + 2 H(+)(out) = Na(+)(out) + 2 H(+)(in). In terms of biological role, na(+)/H(+) antiporter that extrudes sodium in exchange for external protons. The chain is Na(+)/H(+) antiporter NhaA from Proteus mirabilis (strain HI4320).